A 185-amino-acid polypeptide reads, in one-letter code: MCYLSRMSSQQMQLTISGFENRIKILEDLMNEFDSNLYIRLKRECDFKLPKEYDVSIHALTILMKRHLSNMEPIDCYQDLDTGTLQTMLIFCCTLRMIEHYEKSLSNINFFSLSNDLKRLEEYNTSCSVLLSLYQRQLKKISTTIESYYLADTLRHNQNILNLCERIYNIQKLLNKREKASVLRH.

The protein localises to the cytoplasm. Functionally, required for correct meiotic chromosome segregation. This Schizosaccharomyces pombe (strain 972 / ATCC 24843) (Fission yeast) protein is Meiotically up-regulated gene 5 protein (mug5).